The sequence spans 189 residues: Protein GrpE (189 aa).

A compositionally biased stretch (polar residues) spans 1–20 (MSDQQHSAPQNAAATASPSD). The tract at residues 1–29 (MSDQQHSAPQNAAATASPSDSPEAVEATM) is disordered.

The protein belongs to the GrpE family. Homodimer.

It localises to the cytoplasm. Functionally, participates actively in the response to hyperosmotic and heat shock by preventing the aggregation of stress-denatured proteins, in association with DnaK and GrpE. It is the nucleotide exchange factor for DnaK and may function as a thermosensor. Unfolded proteins bind initially to DnaJ; upon interaction with the DnaJ-bound protein, DnaK hydrolyzes its bound ATP, resulting in the formation of a stable complex. GrpE releases ADP from DnaK; ATP binding to DnaK triggers the release of the substrate protein, thus completing the reaction cycle. Several rounds of ATP-dependent interactions between DnaJ, DnaK and GrpE are required for fully efficient folding. The sequence is that of Protein GrpE from Paracidovorax citrulli (strain AAC00-1) (Acidovorax citrulli).